A 95-amino-acid polypeptide reads, in one-letter code: UPF0473 protein PEPE_1260 (95 aa).

The protein belongs to the UPF0473 family.

This is UPF0473 protein PEPE_1260 from Pediococcus pentosaceus (strain ATCC 25745 / CCUG 21536 / LMG 10740 / 183-1w).